Reading from the N-terminus, the 476-residue chain is Glycogen synthase (476 aa).

Residue lysine 15 participates in ADP-alpha-D-glucose binding.

This sequence belongs to the glycosyltransferase 1 family. Bacterial/plant glycogen synthase subfamily.

It carries out the reaction [(1-&gt;4)-alpha-D-glucosyl](n) + ADP-alpha-D-glucose = [(1-&gt;4)-alpha-D-glucosyl](n+1) + ADP + H(+). Its pathway is glycan biosynthesis; glycogen biosynthesis. In terms of biological role, synthesizes alpha-1,4-glucan chains using ADP-glucose. In Streptococcus sanguinis (strain SK36), this protein is Glycogen synthase.